A 161-amino-acid chain; its full sequence is Ribonuclease H (161 aa).

In terms of domain architecture, RNase H type-1 spans 3-144; it reads VLKQLSIFTD…CDTLARVAAE (142 aa). Mg(2+)-binding residues include D12, E50, D72, and D136.

This sequence belongs to the RNase H family. As to quaternary structure, monomer. Mg(2+) is required as a cofactor.

It localises to the cytoplasm. It catalyses the reaction Endonucleolytic cleavage to 5'-phosphomonoester.. Its function is as follows. Endonuclease that specifically degrades the RNA of RNA-DNA hybrids. The polypeptide is Ribonuclease H (Shewanella woodyi (strain ATCC 51908 / MS32)).